A 324-amino-acid polypeptide reads, in one-letter code: Glyoxylate/hydroxypyruvate reductase B (324 aa).

Active-site residues include R237 and E266. The active-site Proton donor is the H285.

Belongs to the D-isomer specific 2-hydroxyacid dehydrogenase family. GhrB subfamily. Homodimer.

The protein localises to the cytoplasm. The enzyme catalyses glycolate + NADP(+) = glyoxylate + NADPH + H(+). It carries out the reaction (R)-glycerate + NAD(+) = 3-hydroxypyruvate + NADH + H(+). The catalysed reaction is (R)-glycerate + NADP(+) = 3-hydroxypyruvate + NADPH + H(+). In terms of biological role, catalyzes the NADPH-dependent reduction of glyoxylate and hydroxypyruvate into glycolate and glycerate, respectively. This is Glyoxylate/hydroxypyruvate reductase B from Escherichia coli O6:K15:H31 (strain 536 / UPEC).